An 893-amino-acid polypeptide reads, in one-letter code: MELDEGELFMELIRDVANELDIDVLCHKILVNVGLLTHADRGSLFLAKGTPNNKYLVAKLFDVTQKTALKDAVTRARAEEIIIPFGIGIAGMVAQTKEMINIKEAYMDARFNCEIDLKTGYKTNAILCMPICNYEGDIIGVAQIINKTNGCMEFDEHDVEIFRRYLTFCGIGIQNAQLFEMSVQEYRRNQILLNLARSIFEEQNNLECLVTKIMTEARELLKCERCSVFLVDLDCCEESHLEKIIEKPHQLEQRATRAIKGGDSFEEKQKMRNRFTVLFELGGESQAANVSRPSINDLSHSTLAQIAQFVATTGQTVNICDVHDWVREHNQIRAEGEIDSTHAILCMPIVNAQKTVIGVAQLINKASGLPFTESDASIFEAFAIFCGLGIHNTQMYENACKLMAKQKVALECLSYHATAGQDQTEKLIQDPIAEAETYNLYSFTFTDFDLVDDDTCRAVLRMFMQCNLVSQFHIPYDVLCRWVLSVRKNYRPVKYHNWRHALNVAQTMFAMLKTGKMERFMTDLEILGLLVACLCHDLDHRGTNNAFQTKTESPLAILYTTSTMEHHHFDQCVMILNSEGNNIFQALSPEDYRSVMKTVESAILSTDLAMYFKKRNAFLELVENGEFDWQGEEKKDLLCGMMMTACDVSAIAKPWEVQHRVAKLVADEFFDQGDLEKLQLNTQPVAMMDRERKDELPKMQVGFIDVICLPLYRVLCDTFPWITPLYEGTLENRRNWQDLAEKVEMGLTWIDHDTIDKPVEEFAGCADEEIKDIEFTVTTLNCNQQSQHGGDDSHTPEHQRSGSRLSIKKTGALGKVVRSKLSKTLYNSMDGSKPKTSLKLLESHVSEDMDDKSPTSPSQPHLGSVGRMSASSSTSSAGTVDKSKKRSKLCALL.

2 consecutive GAF domains span residues 21–173 (DIDV…GIGI) and 205–390 (NLEC…GLGI). The 324-residue stretch at 420 to 743 (GQDQTEKLIQ…RNWQDLAEKV (324 aa)) folds into the PDEase domain. Catalysis depends on His-496, which acts as the Proton donor. A divalent metal cation is bound by residues His-500, His-536, Asp-537, and Asp-647. 2 disordered regions span residues 784 to 807 (QQSQ…RLSI) and 844 to 893 (HVSE…CALL). Basic and acidic residues-rich tracts occupy residues 789–800 (GGDDSHTPEHQR) and 844–853 (HVSEDMDDKS). Over residues 864–880 (SVGRMSASSSTSSAGTV) the composition is skewed to low complexity. Residues 883 to 893 (SKKRSKLCALL) show a composition bias toward basic residues. A Cysteine methyl ester modification is found at Cys-890. Residue Cys-890 is the site of S-farnesyl cysteine attachment. The propeptide at 891-893 (ALL) is removed in mature form.

This sequence belongs to the cyclic nucleotide phosphodiesterase family. Interacts with PrBP. The cofactor is a divalent metal cation.

The protein resides in the cell membrane. The catalysed reaction is 3',5'-cyclic GMP + H2O = GMP + H(+). Functionally, has a role regulating cGMP transport in Malpighian tubule principal cells. The protein is cGMP-specific 3',5'-cyclic phosphodiesterase of Drosophila virilis (Fruit fly).